We begin with the raw amino-acid sequence, 439 residues long: 26S proteasome regulatory subunit 4 homolog (439 aa).

Positions 1–46 (MGNNQSQGQGDKGEKKDQPKYQPPPPPTQFGKKKKRRGAETSTKLP) are disordered. Position 225–232 (225–232 (GEPGTGKT)) interacts with ATP.

This sequence belongs to the AAA ATPase family.

Its subcellular location is the cytoplasm. It is found in the nucleus. Its function is as follows. The 26S proteasome is involved in the ATP-dependent degradation of ubiquitinated proteins. The regulatory (or ATPase) complex confers ATP dependency and substrate specificity to the 26S complex. Plays an important role in regulating both growth and multicellular development. This Dictyostelium discoideum (Social amoeba) protein is 26S proteasome regulatory subunit 4 homolog (psmC1).